A 476-amino-acid polypeptide reads, in one-letter code: Probable rhodanese domain-containing dual specificity protein phosphatase (476 aa).

The Rhodanese domain maps to 32–190 (IGSSKIIIDL…FQKDYSFMCN (159 aa)). Residues 208 to 350 (YPSEIIKDFL…LKDYQQHLTL (143 aa)) form the Tyrosine-protein phosphatase domain. Cys294 serves as the catalytic Phosphocysteine intermediate. The span at 425-436 (KTTTSSTTINNK) shows a compositional bias: low complexity. The interval 425 to 476 (KTTTSSTTINNKGQQQDKAQEEKDSIFSYADKQEKMTHPTLHSPIELPQSSL) is disordered. The span at 442-461 (KAQEEKDSIFSYADKQEKMT) shows a compositional bias: basic and acidic residues.

It belongs to the protein-tyrosine phosphatase family. Non-receptor class dual specificity subfamily.

The enzyme catalyses O-phospho-L-tyrosyl-[protein] + H2O = L-tyrosyl-[protein] + phosphate. It catalyses the reaction O-phospho-L-seryl-[protein] + H2O = L-seryl-[protein] + phosphate. The catalysed reaction is O-phospho-L-threonyl-[protein] + H2O = L-threonyl-[protein] + phosphate. In terms of biological role, has a dual specificity toward Ser/Thr and Tyr-containing proteins. This is Probable rhodanese domain-containing dual specificity protein phosphatase from Dictyostelium discoideum (Social amoeba).